The sequence spans 206 residues: VEL1-related protein SCY_5430 (206 aa).

The first 19 residues, 1-19, serve as a signal peptide directing secretion; sequence MSFLNIFTFFSVLVSVATA.

This sequence belongs to the VEL1 family.

It is found in the cytoplasm. The protein localises to the cytosol. The protein is VEL1-related protein SCY_5430 of Saccharomyces cerevisiae (strain YJM789) (Baker's yeast).